A 430-amino-acid chain; its full sequence is Glycine reductase complex component B subunits alpha and beta (430 aa).

Cys242 acts as the Schiff-base intermediate with substrate; via pyruvic acid in catalysis. A Pyruvic acid (Cys) modification is found at Cys242.

Heterohexamer of two alpha, two beta and two gamma subunits. Component of the glycine reductase complex, together with components A and C. PB is substrate specific. Post-translationally, the peptide chain is cleaved into beta and alpha chains, and the alpha chain N-terminal cysteine is deaminated and oxidized to form a reactive pyruvoyl group.

It carries out the reaction acetyl phosphate + [thioredoxin]-disulfide + NH4(+) + H2O = [thioredoxin]-dithiol + glycine + phosphate + H(+). Functionally, in the first step of glycine reductase, the substrate is bound to component PB via a Schiff base intermediate. Then the PB-activated substrate is nucleophilically attacked by the selenol anion of component PA to transform it to a carboxymethylated selenoether and the respective amine. By action of component PC, acetyl phosphate is formed, leaving component PA in its oxidized state. Finally component PA becomes reduced by the thioredoxin system to start a new catalytic cycle of reductive deamination. The protein is Glycine reductase complex component B subunits alpha and beta (grdE) of Acetoanaerobium sticklandii (strain ATCC 12662 / DSM 519 / JCM 1433 / CCUG 9281 / NCIMB 10654 / HF) (Clostridium sticklandii).